Here is a 157-residue protein sequence, read N- to C-terminus: UPF0756 membrane protein BH3161 (157 aa).

4 helical membrane passes run 1–21 (MISQ…LAKN), 54–74 (LGVT…EIGF), 87–107 (WVAL…IDLL), and 117–137 (LVLG…GPLI).

This sequence belongs to the UPF0756 family.

The protein resides in the cell membrane. The polypeptide is UPF0756 membrane protein BH3161 (Halalkalibacterium halodurans (strain ATCC BAA-125 / DSM 18197 / FERM 7344 / JCM 9153 / C-125) (Bacillus halodurans)).